The sequence spans 633 residues: Pesticidal crystal protein Cry2Ad (633 aa).

This sequence belongs to the delta endotoxin family.

Functionally, promotes colloidosmotic lysis by binding to the midgut epithelial cells of insects. This chain is Pesticidal crystal protein Cry2Ad (cry2Ad), found in Bacillus thuringiensis.